We begin with the raw amino-acid sequence, 1009 residues long: Putative receptor-like protein 8 (1009 aa).

Positions 1-22 are cleaved as a signal peptide; the sequence is MKTNFVILLLLLCVFAISPSQQ. At 23 to 961 the chain is on the extracellular side; that stretch reads EEINQHNPGI…EEDDEAPVDM (939 aa). 2 N-linked (GlcNAc...) asparagine glycosylation sites follow: asparagine 159 and asparagine 197. Residues 204-231 form an LRR 1; degenerate repeat; the sequence is FEEVRSLELSAGLNGFVDNVEGYKSLRK. 25 LRR repeats span residues 232 to 255, 257 to 281, 282 to 305, 306 to 329, 331 to 354, 355 to 377, 379 to 402, 404 to 427, 442 to 465, 466 to 490, 492 to 514, 515 to 538, 540 to 565, 567 to 587, 588 to 612, 613 to 636, 638 to 660, 662 to 681, 682 to 705, 707 to 728, 729 to 752, 819 to 842, 843 to 866, 867 to 891, and 893 to 916; these read LKNL…PFIN, ATSL…EIKD, LTNL…LTHL, KKLK…VVCE, KNLW…LGRL, NKLR…TFNR, ESLE…PLAN, TKLK…SEPK, LEKI…ATIV, HELQ…GYAL, NLLR…MGEM, VNIT…FVTG, FSLK…SFTS, EELR…LLSS, NTTL…MSNL, SGLT…LLAI, FLSL…VGGE, GIKL…DTLL, EKVQ…VNTE, IYIL…LCDL, RNIR…LYNL, LDYM…ELGS, LSKL…SFSN, LKDI…LTNL, and SLVV…QFNT. A glycan (N-linked (GlcNAc...) asparagine) is linked at asparagine 267. Asparagine 390 and asparagine 402 each carry an N-linked (GlcNAc...) asparagine glycan. N-linked (GlcNAc...) asparagine glycans are attached at residues asparagine 497, asparagine 516, asparagine 526, and asparagine 551. N-linked (GlcNAc...) asparagine glycosylation is found at asparagine 588 and asparagine 611. 2 N-linked (GlcNAc...) asparagine glycosylation sites follow: asparagine 716 and asparagine 751. Asparagine 850, asparagine 890, asparagine 903, and asparagine 934 each carry an N-linked (GlcNAc...) asparagine glycan. The segment at 934–955 is disordered; sequence NRSCDAKKTSDESENGGEEEDD. Positions 945–955 are enriched in acidic residues; sequence ESENGGEEEDD. A helical transmembrane segment spans residues 962 to 982; it reads LAFYFSSASTYVTTLIGIFIL. Topologically, residues 983–1009 are cytoplasmic; the sequence is MCFDCPLRRAWLRIVDASIASVKSMLP.

It belongs to the RLP family.

It is found in the cell membrane. This chain is Putative receptor-like protein 8, found in Arabidopsis thaliana (Mouse-ear cress).